The primary structure comprises 85 residues: Conotoxin Lt28.3 (85 aa).

An N-terminal signal peptide occupies residues 1–21; that stretch reads MPKLEMMLLVLLILPLCYIDA. The propeptide occupies 22–40; the sequence is VGPLPPWNMEDEIIEHWQK.

The protein belongs to the conotoxin D superfamily. Post-translationally, contains 5 disulfide bonds. As to expression, expressed by the venom duct.

It localises to the secreted. Its function is as follows. Probable neurotoxin. This Conus litteratus (Lettered cone) protein is Conotoxin Lt28.3.